A 262-amino-acid chain; its full sequence is Small ribosomal subunit protein uS2 (262 aa).

The protein belongs to the universal ribosomal protein uS2 family.

The protein is Small ribosomal subunit protein uS2 of Borreliella burgdorferi (strain ZS7) (Borrelia burgdorferi).